The following is a 962-amino-acid chain: MTRMRVHELAKELNMDNKDLIDRILKLGIQVKNHMSTLTDSAVLKIRQQFSEAKTETVEEKRIGRAVIRRRKKLTEGESAAAPAEGEERVASEALPVEAEMPAQPVEAPELIAEPISKLPPEVGVAQPQLPEEPEPAPEPLIPAVKPEEAAASELAVEPQTVVPPVAAPAAEVKPARPPMEAPAPARKPPEEKETKVKHAEPESLAEPLPSPAPVELTLVPAESAAGQVAERTDEEEEEDDKARPKKAKKRRRKKVRKDEPARIIKLPEIIPEEPEEEAVLPAHLATRIQVKTEEVEVKEAPRKKRPRPEEFEKEAAERKAKGTRRKEVFEREDLYSKQEIAAQDDRGRLKGDKRRPFAKEPARPEIAVVKPGKRKIRVDEAITVANLAKQMGIKATELIKKLLLLGLPANINQAVDFDTAALLASEFEFEVEKTGFEEEELLQVREDRVEDLIRRPPVITVMGHVDHGKTSLLDAIRDTNVIGGEAGGITQHIGAYYVMLPNGNVVFLDTPGHEAFTSMRARGAKVTDIVILVVAADDGVMQQTIEAINHAKAAEVPIIVAINKVDKPNANIDRVKRELAEHGLIPEEWGGNVTMVGISAKKRTGIEELLEMVLLQAELLELKANPAKPARGRVIEAKLDKGRGPVATILIQEGTLRTGDVYLCGVNSGRVRNMFSDRGQRLDEAGPSMPVEVLGLSGVPNAGDDFITLPDERQAKMIAEHRLVKLREKELSRTSKVTLESLFEQIQEGEIKELNLILKADVHGSLEAITDSLLKLSTPEVKVSLIHFGTGAVIETDVMLASASNAIVIGFNVRSETKVQELADQENVDVRYYDVIYQLLSDVKDAMVGMLEPVFKENVIGRAEVRQTFQVPKIGMIAGSFVLEGRVERNAKCRVLRDHVVTYDGKISSLRRFKDDAKEVKAGFECGIGVENFNDIKVGDILEVYELQEMKPVLESPPGDK.

Disordered regions lie at residues 122 to 263 (EVGV…EPAR), 293 to 327 (TEEVEVKEAPRKKRPRPEEFEKEAAERKAKGTRRK), and 341 to 362 (IAAQDDRGRLKGDKRRPFAKEP). Residues 156–173 (AVEPQTVVPPVAAPAAEV) are compositionally biased toward low complexity. Over residues 188 to 202 (KPPEEKETKVKHAEP) the composition is skewed to basic and acidic residues. A compositionally biased stretch (basic residues) spans 244–256 (RPKKAKKRRRKKV). 2 stretches are compositionally biased toward basic and acidic residues: residues 308–327 (RPEEFEKEAAERKAKGTRRK) and 344–362 (QDDRGRLKGDKRRPFAKEP). In terms of domain architecture, tr-type G spans 455 to 624 (RRPPVITVMG…LLQAELLELK (170 aa)). The interval 464–471 (GHVDHGKT) is G1. 464–471 (GHVDHGKT) is a binding site for GTP. The interval 489 to 493 (GITQH) is G2. Positions 510-513 (DTPG) are G3. GTP is bound by residues 510–514 (DTPGH) and 564–567 (NKVD). Residues 564-567 (NKVD) form a G4 region. Residues 600–602 (SAK) form a G5 region.

It belongs to the TRAFAC class translation factor GTPase superfamily. Classic translation factor GTPase family. IF-2 subfamily.

The protein localises to the cytoplasm. Its function is as follows. One of the essential components for the initiation of protein synthesis. Protects formylmethionyl-tRNA from spontaneous hydrolysis and promotes its binding to the 30S ribosomal subunits. Also involved in the hydrolysis of GTP during the formation of the 70S ribosomal complex. In Syntrophobacter fumaroxidans (strain DSM 10017 / MPOB), this protein is Translation initiation factor IF-2.